The primary structure comprises 1192 residues: Leucine-rich repeat receptor protein kinase EMS1 (1192 aa).

Positions 1 to 18 (MAFLTALFLFLFFSFSSS) are cleaved as a signal peptide. A glycan (N-linked (GlcNAc...) asparagine) is linked at asparagine 47. LRR repeat units lie at residues 64 to 87 (LGRV…EISS), 90 to 112 (NLRE…IWNL), 114 to 137 (HLQT…SELP), 138 to 160 (QLLY…FFIS), 163 to 185 (ALSS…IGKL), 187 to 209 (NLSN…IGNI), 235 to 257 (HLAK…FGEL), 259 to 281 (NLSI…LGNC), 283 to 304 (SLKS…ELSE), 330 to 352 (VLDS…IEDC), 354 to 376 (MLKH…LCGS), 378 to 400 (SLEA…FDGC), 402 to 425 (SLGE…WKLP), 426 to 447 (LMAL…LWKS), 449 to 471 (NLME…IGNA), 473 to 496 (SLKR…GKLT), 497 to 520 (SLSV…GDCT), 521 to 543 (SLTT…ITAL), 545 to 567 (QLQC…PSAY), 581 to 603 (HHGI…LGEC), 605 to 628 (VLVE…SRLT), 629 to 651 (NLTI…MGNS), 653 to 675 (KLQG…FGLL), 677 to 697 (SLVK…ASLG), 701 to 723 (ELTH…LSTM), 725 to 748 (KLVG…GNLT), 749 to 772 (QLEY…CGLP), and 773 to 795 (NLEF…GVCQ). N-linked (GlcNAc...) asparagine glycans are attached at residues asparagine 171, asparagine 187, and asparagine 208. Residue asparagine 259 is glycosylated (N-linked (GlcNAc...) asparagine). N-linked (GlcNAc...) asparagine glycosylation is found at asparagine 414 and asparagine 435. Asparagine 555 carries an N-linked (GlcNAc...) asparagine glycan. Asparagine 629 carries an N-linked (GlcNAc...) asparagine glycan. 3 N-linked (GlcNAc...) asparagine glycosylation sites follow: asparagine 682, asparagine 711, and asparagine 746. The chain crosses the membrane as a helical span at residues 828 to 848 (WGIAGLMLGFTIIVFVFVFSL). Threonine 914 carries the phosphothreonine modification. Residues 917–1192 (FSKKNIIGDG…LDVLKALKEI (276 aa)) form the Protein kinase domain. ATP-binding positions include 923 to 931 (IGDGGFGTV) and lysine 945. Tyrosine 990 is subject to Phosphotyrosine. Residue aspartate 1043 is the Proton acceptor of the active site. Phosphotyrosine is present on tyrosine 1085.

It belongs to the protein kinase superfamily. Ser/Thr protein kinase family. As to quaternary structure, interacts with TPD1. In terms of processing, autophosphorylates in vitro. As to expression, present in young buds, open flowers and siliques but absent from mature leaves and roots. Strongly expressed in the young organ primordia, and as the anthers and ovules developed, became focused in the microsporangia and in the distal and chalazal regions of the ovule. In cv. Landsberg erecta, only expressed in the anthers of young floral buds.

It localises to the cell membrane. It catalyses the reaction L-seryl-[protein] + ATP = O-phospho-L-seryl-[protein] + ADP + H(+). It carries out the reaction L-threonyl-[protein] + ATP = O-phospho-L-threonyl-[protein] + ADP + H(+). In terms of biological role, receptor with a serine/threonine-protein kinase activity required for the specification of the correct number of male archesporial initials and for the subsequent specification of tapetal and middle cell layer identities. In seeds, required for enhancing cell size and the rate of embryonic development. The protein is Leucine-rich repeat receptor protein kinase EMS1 of Arabidopsis thaliana (Mouse-ear cress).